Here is a 247-residue protein sequence, read N- to C-terminus: Fasciclin-like arabinogalactan protein 13 (247 aa).

Positions 1-25 (MATTPLLLLLLTAVFLSTEITAQRA) are cleaved as a signal peptide. In terms of domain architecture, FAS1 spans 34–179 (PINITAILEK…LAVYVVDMVL (146 aa)). Residues Asn36, Asn55, Asn68, Asn141, and Asn150 are each glycosylated (N-linked (GlcNAc...) asparagine). The interval 189-228 (KISPMAPPPKSKSPDVSDDSESSKKAAAPSESEKSGSGEM) is disordered. Gly224 carries GPI-anchor amidated glycine lipidation. Positions 225–247 (SGEMNTGLGLGLGLVVLCLKFLL) are cleaved as a propeptide — removed in mature form.

Belongs to the fasciclin-like AGP family.

It localises to the cell membrane. Functionally, may be a cell surface adhesion protein. The sequence is that of Fasciclin-like arabinogalactan protein 13 (FLA13) from Arabidopsis thaliana (Mouse-ear cress).